Reading from the N-terminus, the 460-residue chain is 4-O-methyl-glucuronoyl methylesterase (460 aa).

The first 17 residues, 1-17 (MASRFFALLLLAIPIQA), serve as a signal peptide directing secretion. Pyrrolidone carboxylic acid is present on glutamine 18. The 36-residue stretch at 18–53 (QSPVWGQCGGIGWSGPTTCVGGATCVSYNPYYSQCI) folds into the CBM1 domain. Cystine bridges form between cysteine 96/cysteine 131, cysteine 277/cysteine 412, and cysteine 309/cysteine 384. Positions 276-281 (GCSRNG) match the GXSYXG catalytic site motif motif. The Nucleophile role is filled by serine 278. The substrate site is built by lysine 282, glutamine 324, glutamate 332, and tryptophan 375. The Proton donor/acceptor role is filled by histidine 411. Asparagine 447 carries N-linked (GlcNAc...) asparagine glycosylation.

Belongs to the carbohydrate esterase 15 (CE15) family.

The protein localises to the secreted. It carries out the reaction a 4-O-methyl-alpha-D-glucuronosyl ester derivative + H2O = 4-O-methyl-alpha-D-glucuronate derivative + an alcohol + H(+). Glucuronoyl esterase which may play a significant role in biomass degradation, as it is considered to disconnect hemicellulose from lignin through the hydrolysis of the ester bond between 4-O-methyl-D-glucuronic acid residues of glucuronoxylans and aromatic alcohols of lignin. Does not hydrolyze substrates of other carbohydrate esterases such as acetylxylan esterase, acetyl esterase and feruloyl esterase. This Hypocrea jecorina (strain QM6a) (Trichoderma reesei) protein is 4-O-methyl-glucuronoyl methylesterase.